Here is a 272-residue protein sequence, read N- to C-terminus: D-aminoacyl-tRNA deacylase (272 aa).

As to quaternary structure, monomer. Zn(2+) serves as cofactor.

The catalysed reaction is a D-aminoacyl-tRNA + H2O = a tRNA + a D-alpha-amino acid + H(+). It carries out the reaction glycyl-tRNA(Ala) + H2O = tRNA(Ala) + glycine + H(+). The enzyme catalyses D-tyrosyl-tRNA(Tyr) + H2O = D-tyrosine + tRNA(Tyr). D-aminoacyl-tRNA deacylase with broad substrate specificity. By recycling D-aminoacyl-tRNA to D-amino acids and free tRNA molecules, this enzyme counteracts the toxicity associated with the formation of D-aminoacyl-tRNA entities in vivo. Catalyzes the hydrolysis of D-tyrosyl-tRNA(Tyr) and D-aspartyl-tRNA(Asp). The chain is D-aminoacyl-tRNA deacylase from Pyrococcus abyssi (strain GE5 / Orsay).